Consider the following 268-residue polypeptide: Trypsin-like protease (268 aa).

The N-terminal stretch at 1–41 (MTHTTTIAAKRGGLALAKKAAAAGAVALAVASLQPVSAAHA) is a signal peptide. Residues 42–45 (ADAR) constitute a propeptide, activation peptide. The Peptidase S1 domain maps to 46–266 (VIGGKPAAQN…FAKDIAKAAS (221 aa)). A disulfide bridge connects residues C67 and C83. Residues H82 and D127 each act as charge relay system in the active site. Intrachain disulfides connect C187–C202 and C213–C242. Residue S217 is the Charge relay system of the active site.

The protein belongs to the peptidase S1 family.

Its function is as follows. Protease that shows preferential cleavage after Arg and Lys residues. This is Trypsin-like protease from Streptomyces glaucescens.